Consider the following 131-residue polypeptide: Small ribosomal subunit protein uS8 (131 aa).

Belongs to the universal ribosomal protein uS8 family. As to quaternary structure, part of the 30S ribosomal subunit. Contacts proteins S5 and S12.

In terms of biological role, one of the primary rRNA binding proteins, it binds directly to 16S rRNA central domain where it helps coordinate assembly of the platform of the 30S subunit. The chain is Small ribosomal subunit protein uS8 from Helicobacter acinonychis (strain Sheeba).